A 360-amino-acid chain; its full sequence is Photosystem II protein D1 3 (360 aa).

3 helical membrane passes run 29–46 (YVGWFGVLMIPTLLTATI), 118–133 (HFLLGIFSYMGREWEL), and 142–156 (WIAVAYSAPVAAATA). Residue His-118 coordinates chlorophyll a. Tyr-126 contacts pheophytin a. [CaMn4O5] cluster-binding residues include Asp-170 and Glu-189. A helical membrane pass occupies residues 197-218 (FHMLGVAGVFGGALFSAMHGSL). A chlorophyll a-binding site is contributed by His-198. A quinone is bound by residues His-215 and 264-265 (SF). Residue His-215 coordinates Fe cation. His-272 serves as a coordination point for Fe cation. The chain crosses the membrane as a helical span at residues 274–288 (FLAAWPVIGIWFASL). The [CaMn4O5] cluster site is built by His-332, Glu-333, Asp-342, and Ala-344. A propeptide spanning residues 345 to 360 (AGDQAPVALQAPAING) is cleaved from the precursor.

Belongs to the reaction center PufL/M/PsbA/D family. PSII is composed of 1 copy each of membrane proteins PsbA, PsbB, PsbC, PsbD, PsbE, PsbF, PsbH, PsbI, PsbJ, PsbK, PsbL, PsbM, PsbT, PsbX, PsbY, PsbZ, Psb30/Ycf12, peripheral proteins PsbO, CyanoQ (PsbQ), PsbU, PsbV and a large number of cofactors. It forms dimeric complexes. It depends on The D1/D2 heterodimer binds P680, chlorophylls that are the primary electron donor of PSII, and subsequent electron acceptors. It shares a non-heme iron and each subunit binds pheophytin, quinone, additional chlorophylls, carotenoids and lipids. D1 provides most of the ligands for the Mn4-Ca-O5 cluster of the oxygen-evolving complex (OEC). There is also a Cl(-1) ion associated with D1 and D2, which is required for oxygen evolution. The PSII complex binds additional chlorophylls, carotenoids and specific lipids. as a cofactor. Tyr-161 forms a radical intermediate that is referred to as redox-active TyrZ, YZ or Y-Z. In terms of processing, C-terminally processed by CtpA; processing is essential to allow assembly of the oxygen-evolving complex and thus photosynthetic growth.

The protein resides in the cellular thylakoid membrane. The catalysed reaction is 2 a plastoquinone + 4 hnu + 2 H2O = 2 a plastoquinol + O2. Its function is as follows. Photosystem II (PSII) is a light-driven water:plastoquinone oxidoreductase that uses light energy to abstract electrons from H(2)O, generating O(2) and a proton gradient subsequently used for ATP formation. It consists of a core antenna complex that captures photons, and an electron transfer chain that converts photonic excitation into a charge separation. The D1/D2 (PsbA/PsbD) reaction center heterodimer binds P680, the primary electron donor of PSII as well as several subsequent electron acceptors. In Picosynechococcus sp. (strain ATCC 27264 / PCC 7002 / PR-6) (Agmenellum quadruplicatum), this protein is Photosystem II protein D1 3.